Reading from the N-terminus, the 582-residue chain is Protein alan shepard (582 aa).

Residues 1-12 are compositionally biased toward pro residues; that stretch reads MHPRYSPAPPPQ. A disordered region spans residues 1–73; sequence MHPRYSPAPP…AAPPTSRSAF (73 aa). The residue at position 5 (Tyr-5) is a Phosphotyrosine. Residues 13 to 24 show a composition bias toward low complexity; that stretch reads QQQQMGGPLHQQ. A compositionally biased stretch (gly residues) spans 25-36; that stretch reads QGGGGGGGGGIR. Positions 39 to 57 are enriched in polar residues; that stretch reads SNAQQLPPQIPRSQNYSNG. Over residues 58–72 the composition is skewed to low complexity; that stretch reads SSSSAAAAPPTSRSA. Phosphotyrosine is present on residues Tyr-125 and Tyr-142. Positions 164–225 are disordered; that stretch reads PATTTYGQRV…TVQNQNQQGG (62 aa). The segment covering 178–225 has biased composition (low complexity); sequence SPSNTNSSSSSNTGSQSGTLSTSLSNTTNTNTNMGPNGTVQNQNQQGG. 2 RRM domains span residues 231-304 and 310-389; these read TNLY…MAKQ and TNLY…FADG. Positions 555 to 582 are disordered; that stretch reads PMTDSEQASTAASPDEAYTQYPHQAAPK.

Functionally, has a role in the perception of gravity. In Drosophila yakuba (Fruit fly), this protein is Protein alan shepard.